The chain runs to 459 residues: MNQNPVEEGQKFPLTIRRMGINGEGIGYFKKAVVFVPGAITGEEVVVEAVKVRDRFTEAKLNKIRKKSPNRVTAPCPVYEACGGCQLQHVAYSAQLELKRDIVIQSIEKHTKIDPTKLKIRPTIGMEDPWRYRNKSQFQTRMVGSGQVETGLFGANSHQLVPIEDCIVQQPVTIKVTNFVRDLLEKYGVPIYDEKAGSGIVRTIVVRTGVKTGETQLVFITNSKKLPKKREMLAEIEAALPEVTSIMQNVNQAKSSLIFGDETFLLAGKESIEEKLMELEFDLSARAFFQLNPFQTERLYQEVEKALVLTGSETLVDAYCGVGTIGQAFAGKVKEVRGMDIIPESIEDAKRNAEKNGIENVYYEVGKAEDVLPKWVKEGFRPDAVIVDPPRSGCDQGLIKSLLDVEAKQLVYVSCNPSTLARDLALLAKKYRIRYMQPVDMFPQTAHVETVVLLQLKDK.

Positions 5 to 63 (PVEEGQKFPLTIRRMGINGEGIGYFKKAVVFVPGAITGEEVVVEAVKVRDRFTEAKLNK) constitute a TRAM domain. 4 residues coordinate [4Fe-4S] cluster: cysteine 76, cysteine 82, cysteine 85, and cysteine 166. The S-adenosyl-L-methionine site is built by glutamine 290, tyrosine 319, aspartate 340, and aspartate 388. Cysteine 415 (nucleophile) is an active-site residue.

It belongs to the class I-like SAM-binding methyltransferase superfamily. RNA M5U methyltransferase family.

This is an uncharacterized protein from Listeria monocytogenes serovar 1/2a (strain ATCC BAA-679 / EGD-e).